Reading from the N-terminus, the 163-residue chain is Peptide methionine sulfoxide reductase MsrA (163 aa).

The active site involves C10.

The protein belongs to the MsrA Met sulfoxide reductase family.

The catalysed reaction is L-methionyl-[protein] + [thioredoxin]-disulfide + H2O = L-methionyl-(S)-S-oxide-[protein] + [thioredoxin]-dithiol. The enzyme catalyses [thioredoxin]-disulfide + L-methionine + H2O = L-methionine (S)-S-oxide + [thioredoxin]-dithiol. Has an important function as a repair enzyme for proteins that have been inactivated by oxidation. Catalyzes the reversible oxidation-reduction of methionine sulfoxide in proteins to methionine. This Ruthia magnifica subsp. Calyptogena magnifica protein is Peptide methionine sulfoxide reductase MsrA.